The primary structure comprises 194 residues: dCTP deaminase (194 aa).

DCTP is bound by residues Arg-110 to Arg-115, Asp-128, Val-136 to Glu-138, Tyr-171, Lys-178, and Gln-182. Glu-138 (proton donor/acceptor) is an active-site residue. The tract at residues Asn-172 to Lys-194 is disordered.

It belongs to the dCTP deaminase family. In terms of assembly, homotrimer.

It catalyses the reaction dCTP + H2O + H(+) = dUTP + NH4(+). It participates in pyrimidine metabolism; dUMP biosynthesis; dUMP from dCTP (dUTP route): step 1/2. Functionally, catalyzes the deamination of dCTP to dUTP. The sequence is that of dCTP deaminase from Shewanella loihica (strain ATCC BAA-1088 / PV-4).